The chain runs to 365 residues: Histidinol-phosphate aminotransferase (365 aa).

Lys-221 is subject to N6-(pyridoxal phosphate)lysine.

Belongs to the class-II pyridoxal-phosphate-dependent aminotransferase family. Histidinol-phosphate aminotransferase subfamily. Homodimer. The cofactor is pyridoxal 5'-phosphate.

It catalyses the reaction L-histidinol phosphate + 2-oxoglutarate = 3-(imidazol-4-yl)-2-oxopropyl phosphate + L-glutamate. The protein operates within amino-acid biosynthesis; L-histidine biosynthesis; L-histidine from 5-phospho-alpha-D-ribose 1-diphosphate: step 7/9. The chain is Histidinol-phosphate aminotransferase from Rhodopseudomonas palustris (strain HaA2).